Consider the following 136-residue polypeptide: Protein NrdI (136 aa).

Belongs to the NrdI family.

Functionally, probably involved in ribonucleotide reductase function. The sequence is that of Protein NrdI from Salmonella paratyphi A (strain ATCC 9150 / SARB42).